Consider the following 364-residue polypeptide: Mannose-1-phosphate guanyltransferase (364 aa).

This sequence belongs to the transferase hexapeptide repeat family.

It is found in the cytoplasm. It carries out the reaction alpha-D-mannose 1-phosphate + GTP + H(+) = GDP-alpha-D-mannose + diphosphate. The protein operates within nucleotide-sugar biosynthesis; GDP-alpha-D-mannose biosynthesis; GDP-alpha-D-mannose from alpha-D-mannose 1-phosphate (GTP route): step 1/1. Functionally, involved in cell wall synthesis where it is required for glycosylation. Involved in cell cycle progression through cell-size checkpoint. The sequence is that of Mannose-1-phosphate guanyltransferase (MPG1) from Cryptococcus neoformans var. neoformans serotype D (strain B-3501A) (Filobasidiella neoformans).